The following is a 119-amino-acid chain: Thioredoxin H4 (119 aa).

A Thioredoxin domain is found at 2–115 (AAEEGQVIGC…LQAKIVKHTG (114 aa)). Active-site nucleophile residues include Cys-40 and Cys-43. A disulfide bridge links Cys-40 with Cys-43.

This sequence belongs to the thioredoxin family. Plant H-type subfamily. In terms of assembly, interacts with MDH1.

The protein resides in the cytoplasm. Functionally, thiol-disulfide oxidoreductase probably involved in the redox regulation of a number of cytosolic enzymes. Possesses insulin disulfide bonds reducing activity. The sequence is that of Thioredoxin H4 (TRX4) from Arabidopsis thaliana (Mouse-ear cress).